Consider the following 195-residue polypeptide: MLQPTQTSWVILAGGQASRMGGKDKGLIELNQKPLIEHVIERLSPQTPSILINANRNQDAYRAFGFVFSDQFKDFPGPMGGIHAGLVHAETDWVGFVPCDSPQINTDLVERFCNAVKEDTDILVAHDGDHQQPVFTLYHKRVLPKLTAFLERGDRKIILLYKECNTSYVDFSDSPNCFVNLNTPEELAQFGQLES.

GTP is bound by residues 12–14, lysine 25, asparagine 53, aspartate 70, and aspartate 100; that span reads LAG. Residue aspartate 100 coordinates Mg(2+).

The protein belongs to the MobA family. In terms of assembly, monomer. The cofactor is Mg(2+).

It localises to the cytoplasm. The catalysed reaction is Mo-molybdopterin + GTP + H(+) = Mo-molybdopterin guanine dinucleotide + diphosphate. In terms of biological role, transfers a GMP moiety from GTP to Mo-molybdopterin (Mo-MPT) cofactor (Moco or molybdenum cofactor) to form Mo-molybdopterin guanine dinucleotide (Mo-MGD) cofactor. In Vibrio campbellii (strain ATCC BAA-1116), this protein is Molybdenum cofactor guanylyltransferase.